Reading from the N-terminus, the 503-residue chain is Maturase K (503 aa).

It belongs to the intron maturase 2 family. MatK subfamily.

Its subcellular location is the plastid. The protein localises to the chloroplast. Its function is as follows. Usually encoded in the trnK tRNA gene intron. Probably assists in splicing its own and other chloroplast group II introns. This chain is Maturase K, found in Thryptomene saxicola (Rock thryptomene).